A 445-amino-acid chain; its full sequence is Glutamate--tRNA ligase 1 (445 aa).

The short motif at 8–18 (PSPTGKLHVGN) is the 'HIGH' region element. Positions 239 to 243 (KLSKR) match the 'KMSKS' region motif. Lysine 242 contributes to the ATP binding site.

Belongs to the class-I aminoacyl-tRNA synthetase family. Glutamate--tRNA ligase type 1 subfamily. Monomer.

Its subcellular location is the cytoplasm. The enzyme catalyses tRNA(Glu) + L-glutamate + ATP = L-glutamyl-tRNA(Glu) + AMP + diphosphate. Its function is as follows. Catalyzes the attachment of glutamate to tRNA(Glu) in a two-step reaction: glutamate is first activated by ATP to form Glu-AMP and then transferred to the acceptor end of tRNA(Glu). This is Glutamate--tRNA ligase 1 from Maricaulis maris (strain MCS10) (Caulobacter maris).